The sequence spans 284 residues: Large ribosomal subunit protein uL2 (284 aa).

The tract at residues 232-284 (RGTAMNPVDHPHGGGEGRHNGYIPRTPWGKVTKGLKTRDKRKSNKWIVKDRRK) is disordered. Positions 240 to 250 (DHPHGGGEGRH) are enriched in basic and acidic residues. The span at 264-284 (KGLKTRDKRKSNKWIVKDRRK) shows a compositional bias: basic residues.

The protein belongs to the universal ribosomal protein uL2 family. As to quaternary structure, part of the 50S ribosomal subunit. Forms a bridge to the 30S subunit in the 70S ribosome.

In terms of biological role, one of the primary rRNA binding proteins. Required for association of the 30S and 50S subunits to form the 70S ribosome, for tRNA binding and peptide bond formation. It has been suggested to have peptidyltransferase activity; this is somewhat controversial. Makes several contacts with the 16S rRNA in the 70S ribosome. The sequence is that of Large ribosomal subunit protein uL2 from Chlamydia felis (strain Fe/C-56) (Chlamydophila felis).